Here is a 337-residue protein sequence, read N- to C-terminus: Glycerol-3-phosphate dehydrogenase [NAD(P)+] (337 aa).

NADPH is bound by residues serine 11, tryptophan 12, arginine 32, and lysine 109. Sn-glycerol 3-phosphate is bound by residues lysine 109, glycine 140, and serine 142. NADPH is bound at residue alanine 144. Sn-glycerol 3-phosphate is bound by residues lysine 195, aspartate 248, serine 258, arginine 259, and asparagine 260. Lysine 195 serves as the catalytic Proton acceptor. Arginine 259 contacts NADPH. The NADPH site is built by valine 283 and glutamate 285.

The protein belongs to the NAD-dependent glycerol-3-phosphate dehydrogenase family.

It localises to the cytoplasm. It catalyses the reaction sn-glycerol 3-phosphate + NAD(+) = dihydroxyacetone phosphate + NADH + H(+). The catalysed reaction is sn-glycerol 3-phosphate + NADP(+) = dihydroxyacetone phosphate + NADPH + H(+). It functions in the pathway membrane lipid metabolism; glycerophospholipid metabolism. Functionally, catalyzes the reduction of the glycolytic intermediate dihydroxyacetone phosphate (DHAP) to sn-glycerol 3-phosphate (G3P), the key precursor for phospholipid synthesis. The chain is Glycerol-3-phosphate dehydrogenase [NAD(P)+] from Limosilactobacillus fermentum (strain NBRC 3956 / LMG 18251) (Lactobacillus fermentum).